The following is a 446-amino-acid chain: Glutamyl-tRNA reductase (446 aa).

Substrate-binding positions include 49-52 (TCNR), serine 108, 113-115 (ETQ), and glutamine 119. Cysteine 50 acts as the Nucleophile in catalysis. 188–193 (GAGKMS) serves as a coordination point for NADP(+).

This sequence belongs to the glutamyl-tRNA reductase family. In terms of assembly, homodimer.

It carries out the reaction (S)-4-amino-5-oxopentanoate + tRNA(Glu) + NADP(+) = L-glutamyl-tRNA(Glu) + NADPH + H(+). It functions in the pathway porphyrin-containing compound metabolism; protoporphyrin-IX biosynthesis; 5-aminolevulinate from L-glutamyl-tRNA(Glu): step 1/2. Catalyzes the NADPH-dependent reduction of glutamyl-tRNA(Glu) to glutamate 1-semialdehyde (GSA). This is Glutamyl-tRNA reductase from Desulforudis audaxviator (strain MP104C).